A 116-amino-acid chain; its full sequence is Putative pterin-4-alpha-carbinolamine dehydratase 1 (116 aa).

The protein belongs to the pterin-4-alpha-carbinolamine dehydratase family.

The catalysed reaction is (4aS,6R)-4a-hydroxy-L-erythro-5,6,7,8-tetrahydrobiopterin = (6R)-L-erythro-6,7-dihydrobiopterin + H2O. The sequence is that of Putative pterin-4-alpha-carbinolamine dehydratase 1 from Cupriavidus pinatubonensis (strain JMP 134 / LMG 1197) (Cupriavidus necator (strain JMP 134)).